Reading from the N-terminus, the 155-residue chain is Large ribosomal subunit protein uL22 (155 aa).

A disordered region spans residues 109 to 155 (HITVIVESRPPKKAGKQGASASAARARRAQASKAATKKATDSKEGSE). Residues 146 to 155 (KATDSKEGSE) show a composition bias toward basic and acidic residues.

Belongs to the universal ribosomal protein uL22 family. Part of the 50S ribosomal subunit.

This protein binds specifically to 23S rRNA; its binding is stimulated by other ribosomal proteins, e.g. L4, L17, and L20. It is important during the early stages of 50S assembly. It makes multiple contacts with different domains of the 23S rRNA in the assembled 50S subunit and ribosome. Its function is as follows. The globular domain of the protein is located near the polypeptide exit tunnel on the outside of the subunit, while an extended beta-hairpin is found that lines the wall of the exit tunnel in the center of the 70S ribosome. This chain is Large ribosomal subunit protein uL22, found in Mycolicibacterium vanbaalenii (strain DSM 7251 / JCM 13017 / BCRC 16820 / KCTC 9966 / NRRL B-24157 / PYR-1) (Mycobacterium vanbaalenii).